Here is an 83-residue protein sequence, read N- to C-terminus: uncharacterized protein (83 aa).

This is an uncharacterized protein from Rickettsia prowazekii (strain Madrid E).